The primary structure comprises 213 residues: Homeobox protein koza (213 aa).

Residues I24 to H72 are disordered. The span at S32 to S59 shows a compositional bias: basic and acidic residues. A DNA-binding region (homeobox) is located at residues Q102–Q161.

This sequence belongs to the NK-3 homeobox family. Expressed in the muscle layer of embryonic somites. In tailbud embryos, expressed throughout the entire myotome but at the mid-tailbud stage (stage 32), expression becomes restricted to the outer periphery of the somite so that by the tadpole stage only the outer, type I cells show expression. Also expressed in the dorsal cement gland and in the myocardial layer of the developing heart. In all tissues, expression begins after terminal differentiation.

Its subcellular location is the nucleus. Its function is as follows. May regulate cell proliferation in a tissue-specific manner. This is Homeobox protein koza from Xenopus laevis (African clawed frog).